A 934-amino-acid chain; its full sequence is Diacylglycerol kinase theta (934 aa).

Residues 1 to 50 (MAAAAEPGARTWPGSGSPRLGSPAGSPVLGISGRTRPGSGPERTSRAIGS) form a disordered region. Phosphoserine occurs at positions 22 and 26. 3 Phorbol-ester/DAG-type zinc fingers span residues 54-102 (GHSF…KTPC), 115-162 (AHCF…CSDC), and 177-228 (HHHW…APEC). One can recognise a Ras-associating domain in the interval 387–486 (TQEILKIYPG…TRFYVAETRA (100 aa)). Short sequence motifs (LXXLL motif) lie at residues 547 to 551 (LYMLA) and 566 to 570 (LPDVL). Residues 576–713 (PDCCPLLVFV…MDRWTILLDA (138 aa)) form the DAGKc domain. The span at 905-916 (LRKAKQKPRKAG) shows a compositional bias: basic residues. A disordered region spans residues 905 to 934 (LRKAKQKPRKAGANRDTRVDTLPAPEGNPL).

Belongs to the eukaryotic diacylglycerol kinase family. Interacts with RHOA (constitutively activated, GTP-bound); the interaction inhibits DGKQ. Interacts with PRKCE. Interacts with PRKCH. Interacts with PLCB1. Interacts with NR5A1; the interaction requires both LXXLL motifs in DGKQ and is required for full phosphatidic acid-mediated activation of NR5A1. Phosphorylated by PRKCE and PRKCH in vitro. Widely expressed in all brain regions, including the cortex and hippocampus with a specific expression in neuronal cells (at protein level).

It is found in the cytoplasm. It localises to the cytosol. The protein localises to the cell membrane. The protein resides in the synapse. Its subcellular location is the cytoskeleton. It is found in the nucleus. It localises to the nucleus speckle. The protein localises to the nucleus matrix. It catalyses the reaction a 1,2-diacyl-sn-glycerol + ATP = a 1,2-diacyl-sn-glycero-3-phosphate + ADP + H(+). It carries out the reaction a 1-O-alkyl-sn-glycerol + ATP = a 1-O-alkyl-sn-glycero-3-phosphate + ADP + H(+). The catalysed reaction is 1-O-alkyl-2-acyl-sn-glycerol + ATP = 1-O-alkyl-2-acyl-sn-glycero-3-phosphate + ADP + H(+). The enzyme catalyses 1,2-di-(9Z-octadecenoyl)-sn-glycerol + ATP = 1,2-di-(9Z-octadecenoyl)-sn-glycero-3-phosphate + ADP + H(+). It catalyses the reaction 1-O-hexadecyl-sn-glycerol + ATP = 1-O-hexadecyl-sn-glycero-3-phosphate + ADP + H(+). It carries out the reaction 1-O-hexadecyl-2-acetyl-sn-glycerol + ATP = 1-O-hexadecyl-2-acetyl-sn-glycero-3-phosphate + ADP + H(+). The catalysed reaction is 1-octadecanoyl-2-(5Z,8Z,11Z,14Z-eicosatetraenoyl)-sn-glycerol + ATP = 1-octadecanoyl-2-(5Z,8Z,11Z,14Z-eicosatetraenoyl)-sn-glycero-3-phosphate + ADP + H(+). Its pathway is lipid metabolism; glycerolipid metabolism. Activated by phosphatidylserine. In terms of biological role, diacylglycerol kinase that converts diacylglycerol/DAG into phosphatidic acid/phosphatidate/PA and regulates the respective levels of these two bioactive lipids. Thereby, acts as a central switch between the signaling pathways activated by these second messengers with different cellular targets and opposite effects in numerous biological processes. Within the adrenocorticotropic hormone signaling pathway, produces phosphatidic acid which in turn activates NR5A1 and subsequent steroidogenic gene transcription. Also functions downstream of the nerve growth factor signaling pathway being specifically activated in the nucleus by the growth factor. Through its diacylglycerol activity also regulates synaptic vesicle endocytosis. The polypeptide is Diacylglycerol kinase theta (Dgkq) (Mus musculus (Mouse)).